A 30-amino-acid chain; its full sequence is Cliotide T19 (30 aa).

The cyclopeptide (Gly-Asn) cross-link spans glycine 1–asparagine 30. 3 disulfide bridges follow: cysteine 6–cysteine 20, cysteine 10–cysteine 22, and cysteine 15–cysteine 27.

Post-translationally, contains 3 disulfide bonds. This is a cyclic peptide. Expressed in root nodules but not in seed.

Probably participates in a plant defense mechanism. Active against Gram-negative bacterium E.coli ATCC 700926 (MIC=0.6 uM) under low-salt conditions. Not active against Gram-positive bacterium S.aureus ATCC 12600 up to a concentration of 100 uM under low-salt conditions. Exhibits immunomodulatory activity but no cytotoxicity in vitro. In Clitoria ternatea (Butterfly pea), this protein is Cliotide T19.